A 483-amino-acid polypeptide reads, in one-letter code: Cobyric acid synthase (483 aa).

Positions 248 to 435 (VLKVVVPVLP…LHGLFETAAA (188 aa)) constitute a GATase cobBQ-type domain. Cys329 serves as the catalytic Nucleophile. His427 is an active-site residue.

It belongs to the CobB/CobQ family. CobQ subfamily.

It functions in the pathway cofactor biosynthesis; adenosylcobalamin biosynthesis. Catalyzes amidations at positions B, D, E, and G on adenosylcobyrinic A,C-diamide. NH(2) groups are provided by glutamine, and one molecule of ATP is hydrogenolyzed for each amidation. This Pseudomonas fluorescens (strain SBW25) protein is Cobyric acid synthase.